The chain runs to 691 residues: Elongation factor G 2 (691 aa).

The tr-type G domain maps to 8 to 287 (DRYRNIGIMA…AVVDYLPSPL (280 aa)). GTP contacts are provided by residues 17-24 (AHIDAGKT), 85-89 (DTPGH), and 139-142 (NKMD).

The protein belongs to the TRAFAC class translation factor GTPase superfamily. Classic translation factor GTPase family. EF-G/EF-2 subfamily.

Its subcellular location is the cytoplasm. In terms of biological role, catalyzes the GTP-dependent ribosomal translocation step during translation elongation. During this step, the ribosome changes from the pre-translocational (PRE) to the post-translocational (POST) state as the newly formed A-site-bound peptidyl-tRNA and P-site-bound deacylated tRNA move to the P and E sites, respectively. Catalyzes the coordinated movement of the two tRNA molecules, the mRNA and conformational changes in the ribosome. This chain is Elongation factor G 2, found in Myxococcus xanthus (strain DK1622).